A 310-amino-acid chain; its full sequence is Protein RL1 (310 aa).

Over residues 1 to 12 (MPATDTNSTHTT) the composition is skewed to polar residues. Residues 1–44 (MPATDTNSTHTTPLHPEDQHTLPLHHSTTQPHVQTSDKHADKQH) form a disordered region. Positions 35 to 44 (TSDKHADKQH) are enriched in basic and acidic residues. The tract at residues 153–159 (LLLARQR) is involved in the interaction with host DDB1. The segment at 205 to 252 (ERPSAGEAQARGLLPRIRITPISTSPRPKPPQPTTSTASHPHATARPD) is disordered. The span at 238–248 (TTSTASHPHAT) shows a compositional bias: low complexity.

Belongs to the HHV-5 HKLF1 family. As to quaternary structure, interacts with host adaptor protein DDB1; this interaction allows RL1 to recruit the cullin4-RING E3 ubiquitin ligase (CRL4) complex and promote SLN11 degradation.

Degrades the host antiviral factor SLFN11 via the cullin4-RING E3 ubiquitin ligase (CRL4) complex. This is Protein RL1 (RL1) from Human cytomegalovirus (strain Merlin) (HHV-5).